The following is a 495-amino-acid chain: Trigger factor (495 aa).

In terms of domain architecture, PPIase FKBP-type spans 169 to 254 (GDRVTIDYLG…VKEVAAPGEV (86 aa)). The interval 439–495 (ALLADDESEDKPAAKKAAPKKKAAKAEATEAAAEGEEAAVPKKKAAPKKKAAEDSAE) is disordered.

The protein belongs to the FKBP-type PPIase family. Tig subfamily.

It is found in the cytoplasm. The enzyme catalyses [protein]-peptidylproline (omega=180) = [protein]-peptidylproline (omega=0). Involved in protein export. Acts as a chaperone by maintaining the newly synthesized protein in an open conformation. Functions as a peptidyl-prolyl cis-trans isomerase. The sequence is that of Trigger factor from Rhizobium rhizogenes (strain K84 / ATCC BAA-868) (Agrobacterium radiobacter).